We begin with the raw amino-acid sequence, 483 residues long: Isocitrate dehydrogenase [NADP] (483 aa).

Position 74 (Thr-74) interacts with NADP(+). The D-threo-isocitrate site is built by Ser-83, Asn-85, Arg-89, Arg-99, and Arg-121. Asp-232 is a Mg(2+) binding site. NADP(+)-binding positions include 264-270 (HGSAPDI) and Asn-277.

It belongs to the isocitrate and isopropylmalate dehydrogenases family. As to quaternary structure, homodimer. Mg(2+) is required as a cofactor. Requires Mn(2+) as cofactor.

The enzyme catalyses D-threo-isocitrate + NADP(+) = 2-oxoglutarate + CO2 + NADPH. Its function is as follows. Catalyzes the oxidative decarboxylation of isocitrate to 2-oxoglutarate and carbon dioxide with the concomitant reduction of NADP(+). The chain is Isocitrate dehydrogenase [NADP] (icd) from Rickettsia conorii (strain ATCC VR-613 / Malish 7).